Consider the following 547-residue polypeptide: Carboxypeptidase N subunit 2 (547 aa).

Positions 1-21 (MFPGAWLCWVSLLLLARLTQP) are cleaved as a signal peptide. The LRRNT domain occupies 22–49 (CPVGCDCFGREVFCSDEQLADIPPDIPP). N74, N111, and N119 each carry an N-linked (GlcNAc...) asparagine glycan. LRR repeat units lie at residues 98 to 119 (RLQD…IFSN), 122 to 143 (SLEK…LFCH), 146 to 167 (ILES…LFQS), 170 to 191 (DLRT…AFQS), 194 to 215 (GLQM…ALGS), 218 to 239 (SLQE…LFSQ), 242 to 263 (SLEM…LFSS), 266 to 287 (NLTF…LFAH), 290 to 311 (GLLH…AFTN), 314 to 335 (RLVS…VFRN), 338 to 359 (QLVK…LFHN), and 362 to 383 (RLQL…IFDT). N-linked (GlcNAc...) asparagine glycans are attached at residues N266 and N311. Residues N348, N359, and N367 are each glycosylated (N-linked (GlcNAc...) asparagine). One can recognise an LRRCT domain in the interval 395–447 (NPWQCDCHLSYLTSWLRLYNNQISNTHTFCAGPAYLKGQLVPNLKQEQLICPV). Residue N520 is glycosylated (N-linked (GlcNAc...) asparagine).

Tetramer of two catalytic chains and two glycosylated inactive chains.

The protein resides in the secreted. Its function is as follows. The 83 kDa subunit binds and stabilizes the catalytic subunit at 37 degrees Celsius and keeps it in circulation. Under some circumstances it may be an allosteric modifier of the catalytic subunit. The sequence is that of Carboxypeptidase N subunit 2 (Cpn2) from Mus musculus (Mouse).